Consider the following 340-residue polypeptide: MLEQTTFNAPDGAPYQLITLQNENGMRVQFMDWGATWLSCKVPVNDTLREVLLGCKVDNYPTHQSYLGASVGRYANRIANAQFELNGELIKLSSNQGKHQLHGGEGFDKRRWNIQECGENFVCFSLHSVDGDQGFPGNVDVSVTYTLTGDNSVKIEYAGMCDKDTALNLTNHTYFNLENAEQGSDVREHTLRLNADFYLPVDNEGIPNSPLKHVVNTSFDFRIAKPIKQDFLQGDQQATKGYDHSFIVNKAWQKPCVLLTSPTGDLSLEVRTSQAALQVYTGNYLAGTPTRNGELYADFSGIALETQCLPDTPNHPEWQNYGGIQKAGGRYYQWTEFKFK.

A substrate-binding site is contributed by arginine 77. Catalysis depends on histidine 172, which acts as the Proton donor. Substrate is bound at residue aspartate 243. Glutamate 305 functions as the Proton acceptor in the catalytic mechanism.

This sequence belongs to the aldose epimerase family.

Its subcellular location is the cytoplasm. The enzyme catalyses alpha-D-glucose = beta-D-glucose. Its pathway is carbohydrate metabolism; hexose metabolism. Mutarotase converts alpha-aldose to the beta-anomer. It is active on D-glucose, L-arabinose, D-xylose, D-galactose, maltose and lactose. The chain is Aldose 1-epimerase (galM) from Haemophilus influenzae (strain ATCC 51907 / DSM 11121 / KW20 / Rd).